The primary structure comprises 167 residues: MNAVFPGSFDPVTSGHMDVLTRASHMFEQVTVTVMHNARKQGRHLFTLDERLEILREATAGLPNVRVDSFSGLLVDYVAQQGRSVIVRGLRAVSDYEYELQIAHLNRQIGEVETVFIMAATHWSFVSSSMVKEIASYGGKIHEMVPPASEAALRRKFAEVYDKRDDA.

A substrate-binding site is contributed by S8. Residues 8 to 9 (SF) and H16 contribute to the ATP site. K40, L74, and R88 together coordinate substrate. ATP-binding positions include 89 to 91 (GLR), E99, and 123 to 129 (WSFVSSS).

It belongs to the bacterial CoaD family. As to quaternary structure, homohexamer. Mg(2+) is required as a cofactor.

It is found in the cytoplasm. The catalysed reaction is (R)-4'-phosphopantetheine + ATP + H(+) = 3'-dephospho-CoA + diphosphate. It participates in cofactor biosynthesis; coenzyme A biosynthesis; CoA from (R)-pantothenate: step 4/5. Reversibly transfers an adenylyl group from ATP to 4'-phosphopantetheine, yielding dephospho-CoA (dPCoA) and pyrophosphate. This is Phosphopantetheine adenylyltransferase from Deinococcus radiodurans (strain ATCC 13939 / DSM 20539 / JCM 16871 / CCUG 27074 / LMG 4051 / NBRC 15346 / NCIMB 9279 / VKM B-1422 / R1).